The chain runs to 419 residues: UDP-N-acetylglucosamine 1-carboxyvinyltransferase (419 aa).

A phosphoenolpyruvate-binding site is contributed by 22-23 (KN). Residue Arg-93 participates in UDP-N-acetyl-alpha-D-glucosamine binding. Residue Cys-117 is the Proton donor of the active site. At Cys-117 the chain carries 2-(S-cysteinyl)pyruvic acid O-phosphothioketal. UDP-N-acetyl-alpha-D-glucosamine-binding residues include Asp-307 and Ile-329.

This sequence belongs to the EPSP synthase family. MurA subfamily.

The protein localises to the cytoplasm. The catalysed reaction is phosphoenolpyruvate + UDP-N-acetyl-alpha-D-glucosamine = UDP-N-acetyl-3-O-(1-carboxyvinyl)-alpha-D-glucosamine + phosphate. It functions in the pathway cell wall biogenesis; peptidoglycan biosynthesis. Cell wall formation. Adds enolpyruvyl to UDP-N-acetylglucosamine. This is UDP-N-acetylglucosamine 1-carboxyvinyltransferase from Pseudoalteromonas atlantica (strain T6c / ATCC BAA-1087).